Here is a 145-residue protein sequence, read N- to C-terminus: Large ribosomal subunit protein uL15 (145 aa).

The segment at 1-58 is disordered; that stretch reads MKLHELSPSEGSRKKRKRVGRGPGSGMGGTSTRGNKGHNQRSGGGTRPGFEGGQMPLH. 2 stretches are compositionally biased toward gly residues: residues 21–31 and 42–52; these read RGPGSGMGGTS and SGGGTRPGFEG.

It belongs to the universal ribosomal protein uL15 family. Part of the 50S ribosomal subunit.

Binds to the 23S rRNA. This is Large ribosomal subunit protein uL15 from Desulforapulum autotrophicum (strain ATCC 43914 / DSM 3382 / VKM B-1955 / HRM2) (Desulfobacterium autotrophicum).